A 405-amino-acid polypeptide reads, in one-letter code: MESILALLLALALVPYQLSRGQSFQVNPPESEVAVAMGTSLQITCSMSCDEGVARVHWRGLDTSLGSVQTLPGSSILSVRGMLSDTGTPVCVGSCGSRSFQHSVKILVYAFPDQLVVSPEFLVPGQDQVVSCTAHNIWPADPNSLSFALLLGEQRLEGAQALEPEQEEEIQEAEGTPLFRMTQRWRLPSLGTPAPPALHCQVTMQLPKLVLTHRKEIPVLQSQTSPKPPNTTSAEPYILTSSSTAEAVSTGLNITTLPSAPPYPKLSPRTLSSEGPCRPKIHQDLEAGWELLCEASCGPGVTVRWTLAPGDLATYHKREAGAQAWLSVLPPGPMVEGWFQCRQDPGGEVTNLYVPGQVTPNSSSTVVLWIGSLVLGLLALVFLAYRLWKCYRPGPRPDTSSCTHL.

An N-terminal signal peptide occupies residues 1 to 21 (MESILALLLALALVPYQLSRG). Ig-like domains follow at residues 22 to 109 (QSFQ…ILVY) and 110 to 227 (AFPD…TSPK). Residues 22–364 (QSFQVNPPES…PGQVTPNSSS (343 aa)) are Extracellular-facing. Cystine bridges form between Cys-45/Cys-91, Cys-49/Cys-95, and Cys-132/Cys-200. A mucin-like region spans residues 221-257 (QSQTSPKPPNTTSAEPYILTSSSTAEAVSTGLNITTL). N-linked (GlcNAc...) asparagine glycosylation is found at Asn-230 and Asn-253. Residues 255-275 (TTLPSAPPYPKLSPRTLSSEG) form a disordered region. An Ig-like 3 domain is found at 258–357 (PSAPPYPKLS…EVTNLYVPGQ (100 aa)). A disulfide bridge links Cys-293 with Cys-341. N-linked (GlcNAc...) asparagine glycosylation occurs at Asn-361. A helical membrane pass occupies residues 365–385 (TVVLWIGSLVLGLLALVFLAY). Residues 386–405 (RLWKCYRPGPRPDTSSCTHL) are Cytoplasmic-facing.

As to quaternary structure, homodimer. Post-translationally, O-glycosylated; contains syalic acid. The Ser/Thr-rich mucin-like domain may provide possible sites for O-glycosylation. Highly expressed on high endothelial venules (HEV) of organized intestinal lymphoid tissues like the Peyer patches and mesenteric lymph nodes, and in the lamina propria of the intestine. Some expression found in the spleen, and low levels of expression in the peripheral lymph nodes and the lactating mammary gland. No expression was detected in the liver, kidneys, lungs or in normal brain. Expressed as well in brain endothelioma cells, and mucosal tissues which are in a chronic state of inflammation, such as inflamed pancreas.

It is found in the membrane. Its function is as follows. Cell adhesion leukocyte receptor expressed by mucosal venules, helps to direct lymphocyte traffic into mucosal tissues including the Peyer patches and the intestinal lamina propria. It can bind both the integrin alpha-4/beta-7 and L-selectin, regulating both the passage and retention of leukocytes. Both isoform 1 and isoform 2 can adhere to integrin alpha-4/beta-7. Isoform 2, lacking the mucin-like domain, may be specialized in supporting integrin alpha-4/beta-7-dependent adhesion strengthening, independent of L-selectin binding. The polypeptide is Mucosal addressin cell adhesion molecule 1 (Madcam1) (Mus musculus (Mouse)).